Reading from the N-terminus, the 215-residue chain is Large ribosomal subunit protein uL3c (215 aa).

The segment at 132–151 (RGAMSHGSKSHRRPGSIGAG) is disordered.

The protein belongs to the universal ribosomal protein uL3 family. In terms of assembly, part of the 50S ribosomal subunit.

The protein localises to the plastid. It localises to the chloroplast. Its function is as follows. One of the primary rRNA binding proteins, it binds directly near the 3'-end of the 23S rRNA, where it nucleates assembly of the 50S subunit. The chain is Large ribosomal subunit protein uL3c (rpl3) from Cyanidium caldarium (Red alga).